Reading from the N-terminus, the 159-residue chain is Transcription elongation factor GreA (159 aa).

Residues 44–75 adopt a coiled-coil conformation; the sequence is SENAEYDAAREQQSQTEARIADLENKLSTATI.

Belongs to the GreA/GreB family.

Functionally, necessary for efficient RNA polymerase transcription elongation past template-encoded arresting sites. The arresting sites in DNA have the property of trapping a certain fraction of elongating RNA polymerases that pass through, resulting in locked ternary complexes. Cleavage of the nascent transcript by cleavage factors such as GreA or GreB allows the resumption of elongation from the new 3'terminus. GreA releases sequences of 2 to 3 nucleotides. The protein is Transcription elongation factor GreA of Chlorobium limicola (strain DSM 245 / NBRC 103803 / 6330).